The sequence spans 217 residues: Dephospho-CoA kinase (217 aa).

In terms of domain architecture, DPCK spans Val-2–Lys-217. Ala-10–Thr-15 serves as a coordination point for ATP.

It belongs to the CoaE family.

It localises to the cytoplasm. It carries out the reaction 3'-dephospho-CoA + ATP = ADP + CoA + H(+). It participates in cofactor biosynthesis; coenzyme A biosynthesis; CoA from (R)-pantothenate: step 5/5. Its function is as follows. Catalyzes the phosphorylation of the 3'-hydroxyl group of dephosphocoenzyme A to form coenzyme A. The chain is Dephospho-CoA kinase from Lactococcus lactis subsp. lactis (strain IL1403) (Streptococcus lactis).